Reading from the N-terminus, the 439-residue chain is Ribosomal protein uS12 methylthiotransferase RimO (439 aa).

The MTTase N-terminal domain maps to 5 to 115 (PKIGFVSLGC…LIEAVHTHAP (111 aa)). C14, C50, C79, C146, C150, and C153 together coordinate [4Fe-4S] cluster. One can recognise a Radical SAM core domain in the interval 132–369 (LTPRHYSYLK…MGLQAQISAD (238 aa)). The TRAM domain maps to 372-439 (QRFVGTEQQV…ESTEYDLIAD (68 aa)).

This sequence belongs to the methylthiotransferase family. RimO subfamily. [4Fe-4S] cluster is required as a cofactor.

The protein resides in the cytoplasm. The catalysed reaction is L-aspartate(89)-[ribosomal protein uS12]-hydrogen + (sulfur carrier)-SH + AH2 + 2 S-adenosyl-L-methionine = 3-methylsulfanyl-L-aspartate(89)-[ribosomal protein uS12]-hydrogen + (sulfur carrier)-H + 5'-deoxyadenosine + L-methionine + A + S-adenosyl-L-homocysteine + 2 H(+). In terms of biological role, catalyzes the methylthiolation of an aspartic acid residue of ribosomal protein uS12. The protein is Ribosomal protein uS12 methylthiotransferase RimO of Francisella philomiragia subsp. philomiragia (strain ATCC 25017 / CCUG 19701 / FSC 153 / O#319-036).